Reading from the N-terminus, the 575-residue chain is Trihelix transcription factor GT-2 (575 aa).

Residues 1–11 are compositionally biased toward low complexity; the sequence is MSGNSEGLLES. 4 disordered regions span residues 1-44, 157-181, 232-256, and 339-364; these read MSGN…RWPR, IPWI…HQVS, FSSS…SSRK, and GGQP…DHSI. Residues 40-98 enclose the Myb-like 1 domain; the sequence is NRWPRPETLALLRIRSEMDKAFRDSTLKAPLWEEISRKMMELGYKRSSKKCKEKFENVY. 2 stretches are compositionally biased toward low complexity: residues 161-172 and 232-241; these read SSSNPSTEKSSS and FSSSTSSSTA. Positions 355-364 are enriched in polar residues; sequence RKQYQSDHSI. The 65-residue stretch at 390–454 folds into the Myb-like 2 domain; sequence SVSPSSSRWP…RCKEKWENIN (65 aa). The tract at residues 513–575 is disordered; the sequence is TQTEFETDQR…PMDINNNLFT (63 aa). Over residues 528-555 the composition is skewed to acidic residues; it reads KEDEEEGESEEDEYDEEEEGEGDNETSE. The span at 561–575 shows a compositional bias: polar residues; sequence NKTSSPMDINNNLFT.

Its subcellular location is the nucleus. Its function is as follows. Probable transcription factor that binds specific DNA sequence. The sequence is that of Trihelix transcription factor GT-2 (GT-2) from Arabidopsis thaliana (Mouse-ear cress).